We begin with the raw amino-acid sequence, 245 residues long: tRNA pseudouridine synthase A (245 aa).

Asp52 functions as the Nucleophile in the catalytic mechanism. Tyr111 contacts substrate.

Belongs to the tRNA pseudouridine synthase TruA family. As to quaternary structure, homodimer.

The enzyme catalyses uridine(38/39/40) in tRNA = pseudouridine(38/39/40) in tRNA. Functionally, formation of pseudouridine at positions 38, 39 and 40 in the anticodon stem and loop of transfer RNAs. In Wolbachia pipientis wMel, this protein is tRNA pseudouridine synthase A.